The primary structure comprises 348 residues: ECA polysaccharide chain length modulation protein (348 aa).

Over 1 to 30 (MTQPMPGKPAEDAENELDIRGLFRTLWAGK) the chain is Cytoplasmic. Residues 31 to 51 (LWIIGMGLAFALIALAYTFFA) form a helical membrane-spanning segment. The Periplasmic portion of the chain corresponds to 52–322 (RQEWSSTAIT…EPVKRDSPRR (271 aa)). Residues 323–343 (AFLMIMWGIVGGLIGAGVALT) form a helical membrane-spanning segment. The Cytoplasmic portion of the chain corresponds to 344 to 348 (RRCSK).

This sequence belongs to the WzzB/Cld/Rol family. Homooctamer. Probably part of a complex composed of WzxE, WzyE and WzzE.

The protein resides in the cell inner membrane. It functions in the pathway bacterial outer membrane biogenesis; enterobacterial common antigen biosynthesis. Functionally, modulates the polysaccharide chain length of enterobacterial common antigen (ECA). This chain is ECA polysaccharide chain length modulation protein, found in Escherichia coli O157:H7.